The sequence spans 564 residues: Septation ring formation regulator EzrA (564 aa).

The Extracellular portion of the chain corresponds to 1–4; that stretch reads MVLF. A helical transmembrane segment spans residues 5–23; it reads IILAILVVILIAIGVLFYM. Over 24–564 the chain is Cytoplasmic; it reads RSNKRNLIEK…KHIEEQVIKE (541 aa). Coiled-coil stretches lie at residues 84-126, 165-223, 271-303, and 350-435; these read VEEK…HQVT, EAAE…LIRE, MISRLELDEANNKLENINDKLDEMYDLIEYEVK, and VRQF…RRLL.

It belongs to the EzrA family.

It localises to the cell membrane. In terms of biological role, negative regulator of FtsZ ring formation; modulates the frequency and position of FtsZ ring formation. Inhibits FtsZ ring formation at polar sites. Interacts either with FtsZ or with one of its binding partners to promote depolymerization. The polypeptide is Septation ring formation regulator EzrA (Staphylococcus epidermidis (strain ATCC 12228 / FDA PCI 1200)).